Consider the following 204-residue polypeptide: Urease accessory protein UreG (204 aa).

Residue 11 to 18 participates in GTP binding; that stretch reads GPVGAGKT.

The protein belongs to the SIMIBI class G3E GTPase family. UreG subfamily. Homodimer. UreD, UreF and UreG form a complex that acts as a GTP-hydrolysis-dependent molecular chaperone, activating the urease apoprotein by helping to assemble the nickel containing metallocenter of UreC. The UreE protein probably delivers the nickel.

The protein localises to the cytoplasm. In terms of biological role, facilitates the functional incorporation of the urease nickel metallocenter. This process requires GTP hydrolysis, probably effectuated by UreG. The polypeptide is Urease accessory protein UreG (Staphylococcus epidermidis (strain ATCC 35984 / DSM 28319 / BCRC 17069 / CCUG 31568 / BM 3577 / RP62A)).